The sequence spans 96 residues: Putative septation protein SpoVG (96 aa).

Belongs to the SpoVG family.

Could be involved in septation. This is Putative septation protein SpoVG from Oceanobacillus iheyensis (strain DSM 14371 / CIP 107618 / JCM 11309 / KCTC 3954 / HTE831).